The sequence spans 101 residues: Integration host factor subunit beta (101 aa).

It belongs to the bacterial histone-like protein family. Heterodimer of an alpha and a beta chain.

This protein is one of the two subunits of integration host factor, a specific DNA-binding protein that functions in genetic recombination as well as in transcriptional and translational control. The chain is Integration host factor subunit beta from Maricaulis maris (strain MCS10) (Caulobacter maris).